Here is a 235-residue protein sequence, read N- to C-terminus: Small ribosomal subunit protein uS3 (235 aa).

The 69-residue stretch at 39–107 (VRKFLNKELA…PAQINIAEVK (69 aa)) folds into the KH type-2 domain. Positions 215 to 235 (AQSEQQPADKPKKAPRGKGRK) are disordered.

Belongs to the universal ribosomal protein uS3 family. In terms of assembly, part of the 30S ribosomal subunit. Forms a tight complex with proteins S10 and S14.

Functionally, binds the lower part of the 30S subunit head. Binds mRNA in the 70S ribosome, positioning it for translation. In Haemophilus influenzae (strain PittEE), this protein is Small ribosomal subunit protein uS3.